We begin with the raw amino-acid sequence, 455 residues long: Glutamyl-tRNA reductase (455 aa).

Substrate contacts are provided by residues 49 to 52, serine 109, 114 to 116, and glutamine 120; these read TCNR and ETQ. Cysteine 50 (nucleophile) is an active-site residue. Residue 189 to 194 coordinates NADP(+); the sequence is GAGKMG.

The protein belongs to the glutamyl-tRNA reductase family. As to quaternary structure, homodimer.

The catalysed reaction is (S)-4-amino-5-oxopentanoate + tRNA(Glu) + NADP(+) = L-glutamyl-tRNA(Glu) + NADPH + H(+). The protein operates within porphyrin-containing compound metabolism; protoporphyrin-IX biosynthesis; 5-aminolevulinate from L-glutamyl-tRNA(Glu): step 1/2. Functionally, catalyzes the NADPH-dependent reduction of glutamyl-tRNA(Glu) to glutamate 1-semialdehyde (GSA). The sequence is that of Glutamyl-tRNA reductase from Bacillus subtilis (strain 168).